Consider the following 293-residue polypeptide: Nucleotide-binding protein Csac_1160 (293 aa).

11–18 is an ATP binding site; sequence GMSGAGKS. A GTP-binding site is contributed by 62–65; sequence DIRG.

The protein belongs to the RapZ-like family.

Functionally, displays ATPase and GTPase activities. The polypeptide is Nucleotide-binding protein Csac_1160 (Caldicellulosiruptor saccharolyticus (strain ATCC 43494 / DSM 8903 / Tp8T 6331)).